The primary structure comprises 353 residues: Neutral protease 2 homolog AO090001000135 (353 aa).

The N-terminal stretch at 1–19 (MRFISVSSLLLALAPALNA) is a signal peptide. A propeptide spanning residues 20–176 (VPVEVAGSAQ…TQAVKILERR (157 aa)) is cleaved from the precursor. Intrachain disulfides connect C182–C254 and C261–C279. Residue H304 coordinates Zn(2+). The active site involves E305. Zn(2+) contacts are provided by H308 and D319.

Belongs to the peptidase M35 family. It depends on Zn(2+) as a cofactor.

It localises to the secreted. It catalyses the reaction Preferential cleavage of bonds with hydrophobic residues in P1'. Also 3-Asn-|-Gln-4 and 8-Gly-|-Ser-9 bonds in insulin B chain.. Functionally, secreted metalloproteinase that allows assimilation of proteinaceous substrates. Shows high activities on basic nuclear substrates such as histone and protamine. The chain is Neutral protease 2 homolog AO090001000135 from Aspergillus oryzae (strain ATCC 42149 / RIB 40) (Yellow koji mold).